A 291-amino-acid chain; its full sequence is Secretory carrier-associated membrane protein 5 (291 aa).

A compositionally biased stretch (basic and acidic residues) spans 1–10; that stretch reads MGGRYDRNTF. The interval 1-66 is disordered; the sequence is MGGRYDRNTF…GSGAQDLKKK (66 aa). Topologically, residues 1–126 are cytoplasmic; that stretch reads MGGRYDRNTF…EILVRLQRLQ (126 aa). S34 is subject to Phosphoserine. Residues 58-94 are a coiled coil; that stretch reads SGAQDLKKKEKELQAKEADLRRREQDLKRKQDAAARA. Transmembrane regions (helical) follow at residues 127–147, 159–179, 194–214, and 242–262; these read YIAFATYLGLVLALFWNIIAV, IWLLAVIYFISGVPGGYVLWY, FGWFFLFYMLHILFCLFAAVA, and IFYFIGFGLFCLESVVSIWVI. Residues 263 to 288 are Cytoplasmic-facing; sequence QQVYMYFRGSGKADDMRRDAARGAMR.

Belongs to the SCAMP family.

Its subcellular location is the cell membrane. The protein localises to the cytoplasmic vesicle. The protein resides in the secretory vesicle membrane. In terms of biological role, probably involved in membrane trafficking. The protein is Secretory carrier-associated membrane protein 5 (SCAMP5) of Arabidopsis thaliana (Mouse-ear cress).